A 417-amino-acid polypeptide reads, in one-letter code: Cobalamin binding intrinsic factor (417 aa).

A signal peptide spans 1–22; sequence MAWFSLHLLHLLWAAAGTSTWA. Intrachain disulfides connect cysteine 26-cysteine 246, cysteine 103-cysteine 288, and cysteine 143-cysteine 182. Asparagine 100 carries N-linked (GlcNAc...) asparagine glycosylation. Aspartate 171 serves as a coordination point for cob(II)alamin. At serine 191 the chain carries Phosphoserine. Asparagine 209 carries an N-linked (GlcNAc...) asparagine glycan. Aspartate 222 and glutamine 270 together coordinate cob(II)alamin. N-linked (GlcNAc...) asparagine glycans are attached at residues asparagine 311 and asparagine 330. Cob(II)alamin is bound by residues 365–370 and 386–395; these read SWGLVV and WQFLSGKTPL. The N-linked (GlcNAc...) asparagine glycan is linked to asparagine 413.

Belongs to the eukaryotic cobalamin transport proteins family. As to quaternary structure, interacts with CUBN (via CUB domains).

It is found in the secreted. Its function is as follows. Promotes absorption of the essential vitamin cobalamin (Cbl) in the ileum. After interaction with CUBN, the CBLIF-cobalamin complex is internalized via receptor-mediated endocytosis. This chain is Cobalamin binding intrinsic factor (CBLIF), found in Canis lupus familiaris (Dog).